A 384-amino-acid polypeptide reads, in one-letter code: Lipid-A-disaccharide synthase (384 aa).

This sequence belongs to the LpxB family.

The enzyme catalyses 2-N,3-O-bis[(3R)-3-hydroxytetradecanoyl]-alpha-D-glucosaminyl 1-phosphate + UDP-2-N,3-O-bis[(3R)-3-hydroxytetradecanoyl]-alpha-D-glucosamine = lipid A disaccharide (E. coli) + UDP + H(+). It carries out the reaction a lipid X + a UDP-2-N,3-O-bis[(3R)-3-hydroxyacyl]-alpha-D-glucosamine = a lipid A disaccharide + UDP + H(+). Its pathway is glycolipid biosynthesis; lipid IV(A) biosynthesis; lipid IV(A) from (3R)-3-hydroxytetradecanoyl-[acyl-carrier-protein] and UDP-N-acetyl-alpha-D-glucosamine: step 5/6. Condensation of UDP-2,3-diacylglucosamine and 2,3-diacylglucosamine-1-phosphate to form lipid A disaccharide, a precursor of lipid A, a phosphorylated glycolipid that anchors the lipopolysaccharide to the outer membrane of the cell. The sequence is that of Lipid-A-disaccharide synthase from Blochmanniella floridana.